Here is a 246-residue protein sequence, read N- to C-terminus: Chanoclavine-I dehydrogenase easD (246 aa).

A signal peptide spans 1 to 20; the sequence is MASVSSKIFAITGGASGIGA. Residues Ile-18, Asp-66, Arg-132, Tyr-169, and Lys-173 each contribute to the NADP(+) site. The active-site Proton donor is the Tyr-169. Lys-173 serves as the catalytic Lowers pKa of active site Tyr.

It belongs to the short-chain dehydrogenases/reductases (SDR) family. In terms of assembly, homotetramer.

It catalyses the reaction chanoclavine-I + NAD(+) = chanoclavine-I aldehyde + NADH + H(+). The protein operates within alkaloid biosynthesis; ergot alkaloid biosynthesis. Functionally, chanoclavine-I dehydrogenase; part of the gene cluster that mediates the biosynthesis of fungal ergot alkaloid. DmaW catalyzes the first step of ergot alkaloid biosynthesis by condensing dimethylallyl diphosphate (DMAP) and tryptophan to form 4-dimethylallyl-L-tryptophan. The second step is catalyzed by the methyltransferase easF that methylates 4-dimethylallyl-L-tryptophan in the presence of S-adenosyl-L-methionine, resulting in the formation of 4-dimethylallyl-L-abrine. The catalase easC and the FAD-dependent oxidoreductase easE then transform 4-dimethylallyl-L-abrine to chanoclavine-I which is further oxidized by easD in the presence of NAD(+), resulting in the formation of chanoclavine-I aldehyde. Chanoclavine-I aldehyde is the precursor of ergoamides and ergopeptines in Clavicipitaceae, and clavine-type alcaloids such as fumiclavine in Trichocomaceae. However, the metabolites downstream of chanoclavine-I aldehyde in Arthrodermataceae have not been identified yet. The sequence is that of Chanoclavine-I dehydrogenase easD from Arthroderma benhamiae (strain ATCC MYA-4681 / CBS 112371) (Trichophyton mentagrophytes).